We begin with the raw amino-acid sequence, 386 residues long: uncharacterized protein (386 aa).

Helical transmembrane passes span 48–68, 78–98, 136–156, 171–191, 213–233, 253–273, 285–305, 316–336, and 344–364; these read NLIT…MLVY, PSWV…FDAI, LQLD…YFYI, YFSG…LTAI, FLPY…ALLL, VIKA…VFSL, FLTI…VVIV, WNVL…FGVL, and FFCY…HVIA.

It belongs to the CDP-alcohol phosphatidyltransferase class-I family.

It localises to the membrane. This is an uncharacterized protein from Schizosaccharomyces pombe (strain 972 / ATCC 24843) (Fission yeast).